The following is an 82-amino-acid chain: Sec-independent protein translocase protein TatA (82 aa).

The helical transmembrane segment at 1 to 21 (MGGISIWQLLIIAVIIVLLFG) threads the bilayer. A disordered region spans residues 48–82 (PAKEAKKDADFVPQNLEKKEAETVEKQKQNDKEQA).

It belongs to the TatA/E family. In terms of assembly, the Tat system comprises two distinct complexes: a TatABC complex, containing multiple copies of TatA, TatB and TatC subunits, and a separate TatA complex, containing only TatA subunits. Substrates initially bind to the TatABC complex, which probably triggers association of the separate TatA complex to form the active translocon.

The protein resides in the cell inner membrane. In terms of biological role, part of the twin-arginine translocation (Tat) system that transports large folded proteins containing a characteristic twin-arginine motif in their signal peptide across membranes. TatA could form the protein-conducting channel of the Tat system. This is Sec-independent protein translocase protein TatA from Aliivibrio fischeri (strain ATCC 700601 / ES114) (Vibrio fischeri).